Consider the following 931-residue polypeptide: Isoleucine--tRNA ligase (931 aa).

The short motif at 57–67 (PFANGNIHMGH) is the 'HIGH' region element. Glutamate 556 contacts L-isoleucyl-5'-AMP. The 'KMSKS' region motif lies at 597-601 (KMSKS). Position 600 (lysine 600) interacts with ATP. Residues cysteine 890, cysteine 893, cysteine 910, and cysteine 913 each coordinate Zn(2+).

It belongs to the class-I aminoacyl-tRNA synthetase family. IleS type 1 subfamily. In terms of assembly, monomer. Requires Zn(2+) as cofactor.

It localises to the cytoplasm. The catalysed reaction is tRNA(Ile) + L-isoleucine + ATP = L-isoleucyl-tRNA(Ile) + AMP + diphosphate. Its function is as follows. Catalyzes the attachment of isoleucine to tRNA(Ile). As IleRS can inadvertently accommodate and process structurally similar amino acids such as valine, to avoid such errors it has two additional distinct tRNA(Ile)-dependent editing activities. One activity is designated as 'pretransfer' editing and involves the hydrolysis of activated Val-AMP. The other activity is designated 'posttransfer' editing and involves deacylation of mischarged Val-tRNA(Ile). The sequence is that of Isoleucine--tRNA ligase from Lactobacillus delbrueckii subsp. bulgaricus (strain ATCC BAA-365 / Lb-18).